The sequence spans 404 residues: MTDARPRICILGGGFGGLYTALRLGQLSWEGHTPPEIVLVDQRDRFLFAPFLYELVTEEMQTWEIAPPFVELLAESGVIFRQAEVTAIDFDHQKVLLNDQDKGTESLAFDQLVIALGGQTPLPNLPGLKDYGLGFRTLEDAYKLKQKLKSLEQADAEKIRIAIVGGGYSGVELAAKLGDRLGERGRIRIIERGKEILAMSPEFNRQQAQASLSAKGIWVDTETTVTAITATDVTLQFREQEDVIPVDLVLWTVGTTVSPLIRNLALPHNDQGQLRTNAQLQVEGKTNIFALGDGAEGRDASGQLIPTTAQGAFQQTDYCAWNIWANLTGRPLLPCRYQPLGEMLALGTDGAVLSGLGIKLSGPAALLARRLVYLYRFPTWQHQLTVGLNWLTRPLGDWLKNEPS.

Residue 7–43 (RICILGGGFGGLYTALRLGQLSWEGHTPPEIVLVDQR) coordinates FAD. 159-195 (IRIAIVGGGYSGVELAAKLGDRLGERGRIRIIERGKE) contributes to the NADP(+) binding site.

This sequence belongs to the NADH dehydrogenase family. The cofactor is FAD.

It catalyses the reaction demethylphylloquinone + NADPH + H(+) = demethylphylloquinol + NADP(+). It functions in the pathway cofactor biosynthesis; phylloquinone biosynthesis. Its activity is regulated as follows. Inhibited by dicumarol. Bifunctional oxidoreductase probably ables to act both on prenyl naphthoquinones and on prenyl benzoquinones. Catalyzes the penultimate step in the biosynthesis of vitamin K1. This is Demethylphylloquinone reductase NdbB from Synechocystis sp. (strain ATCC 27184 / PCC 6803 / Kazusa).